The following is a 483-amino-acid chain: UDP-N-acetylmuramoyl-L-alanyl-D-glutamate--2,6-diaminopimelate ligase (483 aa).

Ser-30 contacts UDP-N-acetyl-alpha-D-muramoyl-L-alanyl-D-glutamate. Residue 109–115 (GTNGKTT) participates in ATP binding. Residues 151 to 152 (TT), Ser-178, and Arg-186 each bind UDP-N-acetyl-alpha-D-muramoyl-L-alanyl-D-glutamate. Lys-218 carries the N6-carboxylysine modification. Residues Arg-380, 403–406 (DNPR), Gly-453, and Glu-457 contribute to the meso-2,6-diaminopimelate site. The short motif at 403–406 (DNPR) is the Meso-diaminopimelate recognition motif element.

It belongs to the MurCDEF family. MurE subfamily. Requires Mg(2+) as cofactor. Carboxylation is probably crucial for Mg(2+) binding and, consequently, for the gamma-phosphate positioning of ATP.

It is found in the cytoplasm. The catalysed reaction is UDP-N-acetyl-alpha-D-muramoyl-L-alanyl-D-glutamate + meso-2,6-diaminopimelate + ATP = UDP-N-acetyl-alpha-D-muramoyl-L-alanyl-gamma-D-glutamyl-meso-2,6-diaminopimelate + ADP + phosphate + H(+). It participates in cell wall biogenesis; peptidoglycan biosynthesis. Functionally, catalyzes the addition of meso-diaminopimelic acid to the nucleotide precursor UDP-N-acetylmuramoyl-L-alanyl-D-glutamate (UMAG) in the biosynthesis of bacterial cell-wall peptidoglycan. The protein is UDP-N-acetylmuramoyl-L-alanyl-D-glutamate--2,6-diaminopimelate ligase of Chlamydia caviae (strain ATCC VR-813 / DSM 19441 / 03DC25 / GPIC) (Chlamydophila caviae).